A 78-amino-acid chain; its full sequence is MAKAVIRKPKKKVCQFCKEKATGVDYKDTALLRKFISDRGKIRARRVTGNCVQHQRDVAIAVKNAREVALLPYTSTGR.

It belongs to the bacterial ribosomal protein bS18 family. Part of the 30S ribosomal subunit. Forms a tight heterodimer with protein bS6.

Its function is as follows. Binds as a heterodimer with protein bS6 to the central domain of the 16S rRNA, where it helps stabilize the platform of the 30S subunit. This is Small ribosomal subunit protein bS18 from Nocardioides sp. (strain ATCC BAA-499 / JS614).